The chain runs to 449 residues: Uridine-cytidine kinase C (449 aa).

58 to 65 (GPSGAGKT) is an ATP binding site. One can recognise a CYTH domain in the interval 235–401 (NPIYILKSVK…QKSYIELYQD (167 aa)).

The protein belongs to the uridine kinase family.

It catalyses the reaction uridine + ATP = UMP + ADP + H(+). The enzyme catalyses cytidine + ATP = CMP + ADP + H(+). It functions in the pathway pyrimidine metabolism; CTP biosynthesis via salvage pathway; CTP from cytidine: step 1/3. Its pathway is pyrimidine metabolism; UMP biosynthesis via salvage pathway; UMP from uridine: step 1/1. Catalyzes the conversion of uridine into uridine monophosphate and cytidine into cytidine monophosphate in the pyrimidine salvage pathway. In Dictyostelium discoideum (Social amoeba), this protein is Uridine-cytidine kinase C (udkC).